We begin with the raw amino-acid sequence, 425 residues long: 5-aminovalerate aminotransferase DavT (425 aa).

Residues 112–113 (GS), Y139, and 240–243 (DEVQ) contribute to the pyridoxal 5'-phosphate site. Position 269 is an N6-(pyridoxal phosphate)lysine (K269). Residue T298 coordinates pyridoxal 5'-phosphate.

This sequence belongs to the class-III pyridoxal-phosphate-dependent aminotransferase family. Pyridoxal 5'-phosphate is required as a cofactor.

It carries out the reaction 5-aminopentanoate + 2-oxoglutarate = 5-oxopentanoate + L-glutamate. Its function is as follows. Catalyzes the conversion of 5-aminovalerate to 5-oxopentanoate. This is 5-aminovalerate aminotransferase DavT (davT) from Pseudomonas putida (strain ATCC 47054 / DSM 6125 / CFBP 8728 / NCIMB 11950 / KT2440).